Reading from the N-terminus, the 1054-residue chain is SMC5-SMC6 complex localization factor protein 1 (1054 aa).

BRCT domains follow at residues 2–80 and 121–199; these read EDSA…AKSG and PGAF…LLEK. The segment at 283 to 303 is disordered; it reads RHGLENQKETKKKDKNIQRSY. The segment covering 284-299 has biased composition (basic and acidic residues); the sequence is HGLENQKETKKKDKNI. An NSE5-like domain; mediates interaction with SLF2 region spans residues 407–1054; it reads PRGILNLIEN…MMCQSITELS (648 aa). 3 ANK repeats span residues 802–832, 836–865, and 870–900; these read KGETALHRVCIKNQVEKLIILLSLPGIDINV, AGWTPLHEACNYGNTECVQEILQRCPEVDL, and DGVTPLHDALSNGHVEIGKLLLQRGGPELLQ.

As to quaternary structure, interacts (via BRCT domains) with RAD18 (via C-terminus and phosphorylated form); this interaction is required for efficient repair of UV-induced DNA damage. Interacts (via N-terminus) with SLF2; this interaction links RAD18 to the SMC5-SMC6 complex. Interacts (via BRCT domains) with RAD18; this interaction occurs in a SLF2-independent manner. Interacts with SMC6. In terms of tissue distribution, widely expressed. Expressed in testis. Expressed in spermatocytes.

It localises to the nucleus. Its subcellular location is the cytoplasm. It is found in the cytoskeleton. The protein resides in the microtubule organizing center. The protein localises to the centrosome. Its function is as follows. Plays a role in the DNA damage response (DDR) pathway by regulating postreplication repair of UV-damaged DNA and genomic stability maintenance. The SLF1-SLF2 complex acts to link RAD18 with the SMC5-SMC6 complex at replication-coupled interstrand cross-links (ICL) and DNA double-strand breaks (DSBs) sites on chromatin during DNA repair in response to stalled replication forks. Promotes the recruitment of SLF2 and the SMC5-SMC6 complex to DNA lesions. The protein is SMC5-SMC6 complex localization factor protein 1 of Mus musculus (Mouse).